The primary structure comprises 95 residues: Exodeoxyribonuclease 7 small subunit (95 aa).

Positions 62–83 (LTKDESKKTNKTGFRGESKTTE) are enriched in basic and acidic residues. The interval 62–95 (LTKDESKKTNKTGFRGESKTTETKNNTAQEEDLF) is disordered.

The protein belongs to the XseB family. Heterooligomer composed of large and small subunits.

It is found in the cytoplasm. The enzyme catalyses Exonucleolytic cleavage in either 5'- to 3'- or 3'- to 5'-direction to yield nucleoside 5'-phosphates.. In terms of biological role, bidirectionally degrades single-stranded DNA into large acid-insoluble oligonucleotides, which are then degraded further into small acid-soluble oligonucleotides. This chain is Exodeoxyribonuclease 7 small subunit, found in Leptospira interrogans serogroup Icterohaemorrhagiae serovar copenhageni (strain Fiocruz L1-130).